The following is a 141-amino-acid chain: Nucleoside diphosphate kinase (141 aa).

Lys-11, Phe-59, Arg-87, Thr-93, Arg-104, and Asn-114 together coordinate ATP. His-117 functions as the Pros-phosphohistidine intermediate in the catalytic mechanism.

This sequence belongs to the NDK family. Homotetramer. The cofactor is Mg(2+).

It localises to the cytoplasm. The catalysed reaction is a 2'-deoxyribonucleoside 5'-diphosphate + ATP = a 2'-deoxyribonucleoside 5'-triphosphate + ADP. It carries out the reaction a ribonucleoside 5'-diphosphate + ATP = a ribonucleoside 5'-triphosphate + ADP. Functionally, major role in the synthesis of nucleoside triphosphates other than ATP. The ATP gamma phosphate is transferred to the NDP beta phosphate via a ping-pong mechanism, using a phosphorylated active-site intermediate. The polypeptide is Nucleoside diphosphate kinase (Pseudomonas entomophila (strain L48)).